A 262-amino-acid polypeptide reads, in one-letter code: Acyl-[acyl-carrier-protein]--UDP-N-acetylglucosamine O-acyltransferase (262 aa).

Belongs to the transferase hexapeptide repeat family. LpxA subfamily. Homotrimer.

The protein resides in the cytoplasm. It catalyses the reaction a (3R)-hydroxyacyl-[ACP] + UDP-N-acetyl-alpha-D-glucosamine = a UDP-3-O-[(3R)-3-hydroxyacyl]-N-acetyl-alpha-D-glucosamine + holo-[ACP]. Its pathway is glycolipid biosynthesis; lipid IV(A) biosynthesis; lipid IV(A) from (3R)-3-hydroxytetradecanoyl-[acyl-carrier-protein] and UDP-N-acetyl-alpha-D-glucosamine: step 1/6. In terms of biological role, involved in the biosynthesis of lipid A, a phosphorylated glycolipid that anchors the lipopolysaccharide to the outer membrane of the cell. This Paraburkholderia phytofirmans (strain DSM 17436 / LMG 22146 / PsJN) (Burkholderia phytofirmans) protein is Acyl-[acyl-carrier-protein]--UDP-N-acetylglucosamine O-acyltransferase.